Consider the following 202-residue polypeptide: MVNYPHNPIRQKVTPLQKQQKHRQVDFANRGMSFEAAINATNAYYLAKGIAVIHKKPTPIQIVKVDYPRRSRAKIVEAYFKQASTTDYSGIYKGHYIDFEAKETRQKTAMPMKNFHAHQIEHMAAVLKQKGICFVLLHFATLKETYYLPAKALIDFYQIDRGNKSMPLDYIRKNGFEVKLGAFPQVPYLDIIEQKFLGGDYN.

4 residues coordinate Mg(2+): Thr85, Asp87, Glu100, and Gln119.

It belongs to the RecU family. The cofactor is Mg(2+).

It localises to the cytoplasm. The enzyme catalyses Endonucleolytic cleavage at a junction such as a reciprocal single-stranded crossover between two homologous DNA duplexes (Holliday junction).. Its function is as follows. Endonuclease that resolves Holliday junction intermediates in genetic recombination. Cleaves mobile four-strand junctions by introducing symmetrical nicks in paired strands. Promotes annealing of linear ssDNA with homologous dsDNA. Required for DNA repair, homologous recombination and chromosome segregation. This chain is Holliday junction resolvase RecU, found in Streptococcus equi subsp. zooepidemicus (strain MGCS10565).